Reading from the N-terminus, the 156-residue chain is Ribosomal RNA large subunit methyltransferase H (156 aa).

S-adenosyl-L-methionine is bound by residues L73, G104, and 123–128 (LSALTL).

It belongs to the RNA methyltransferase RlmH family. Homodimer.

The protein resides in the cytoplasm. It carries out the reaction pseudouridine(1915) in 23S rRNA + S-adenosyl-L-methionine = N(3)-methylpseudouridine(1915) in 23S rRNA + S-adenosyl-L-homocysteine + H(+). In terms of biological role, specifically methylates the pseudouridine at position 1915 (m3Psi1915) in 23S rRNA. The protein is Ribosomal RNA large subunit methyltransferase H of Shewanella putrefaciens (strain CN-32 / ATCC BAA-453).